Consider the following 214-residue polypeptide: Oocyte zinc finger protein XlCOF10 (214 aa).

C2H2-type zinc fingers lie at residues 1 to 23, 29 to 51, 57 to 79, 85 to 107, 113 to 135, 141 to 163, and 169 to 191; these read FSCSQCDESFVQRSELELHRQLH, FTCSECGKCFKRFSLLKEHHRIH, FTCDECGKCFTQKSHMTAHQKSH, FCCSECGKHFKQNSQLVVHQRTH, FTCTESGQWFKLQSYLTEHQKSH, FSCSDCGKCFKRHSLFIEHQRIH, and FSCSVCEKTFTRRSHLTAHEKCH.

The protein belongs to the krueppel C2H2-type zinc-finger protein family.

The protein resides in the nucleus. In terms of biological role, may be involved in transcriptional regulation. The protein is Oocyte zinc finger protein XlCOF10 of Xenopus laevis (African clawed frog).